Reading from the N-terminus, the 829-residue chain is Cation/H(+) antiporter 14 (829 aa).

Helical transmembrane passes span 48 to 68, 77 to 97, 117 to 137, 145 to 165, 180 to 200, 215 to 235, 240 to 260, 281 to 301, 329 to 349, 361 to 383, 392 to 412, and 425 to 445; these read YAMP…RLLY, GMIS…FGQS, SNLG…ASII, ILIG…TVLF, ISTV…TVLA, NCSI…RMFL, LASV…FFVC, IPFF…EVLG, LEMF…GLQT, IIEA…ASAY, FSLA…CVMW, and LLII…VCLY. S827 carries the phosphoserine modification.

It belongs to the monovalent cation:proton antiporter 2 (CPA2) transporter (TC 2.A.37) family. CHX (TC 2.A.37.4) subfamily. Preferentially expressed in pollen but also detected in vegetative tissues like leaf trichomes and root vascular tissues.

It localises to the membrane. May operate as a cation/H(+) antiporter. The protein is Cation/H(+) antiporter 14 (CHX14) of Arabidopsis thaliana (Mouse-ear cress).